A 320-amino-acid chain; its full sequence is Peptidase 1 (320 aa).

Positions 1 to 18 (MKIVLAIASLLALSAVYA) are cleaved as a signal peptide. The propeptide at 19–98 (RPSSIKTFEE…LKTQFDLNAE (80 aa)) is activation peptide. 3 disulfide bridges follow: cysteine 102–cysteine 215, cysteine 129–cysteine 169, and cysteine 163–cysteine 201. Residue cysteine 132 is part of the active site. An N-linked (GlcNAc...) asparagine glycan is attached at asparagine 150. Active-site residues include histidine 268 and asparagine 288.

This sequence belongs to the peptidase C1 family. Post-translationally, N-glycosylated. N-glycanase treatment does not completely remove carbohydrates, suggesting that the protein contains additional glycosylation sites.

Its subcellular location is the secreted. The enzyme catalyses Broad endopeptidase specificity.. Thiol protease, with a preference for substrates with a large hydrophobic side chain in the P2 position, or with basic residues. This chain is Peptidase 1 (DERP1), found in Dermatophagoides pteronyssinus (European house dust mite).